Consider the following 340-residue polypeptide: Glutamine synthetase (340 aa).

In terms of domain architecture, GS beta-grasp spans 3–82; it reads IKAEYIWIDG…LCEVLHTDLT (80 aa). Residues 88–340 enclose the GS catalytic domain; that stretch reads TRALLRPVAE…CTELARREQI (253 aa). 4 residues coordinate Mg(2+): Glu109, Glu111, Glu171, and Glu178. Glu276 contacts L-glutamate.

It belongs to the glutamine synthetase family. In terms of assembly, homooctamer and homotetramer. It depends on Mg(2+) as a cofactor.

Its subcellular location is the cytoplasm. It catalyses the reaction L-glutamate + NH4(+) + ATP = L-glutamine + ADP + phosphate + H(+). Catalyzes the ATP-dependent biosynthesis of glutamine from glutamate and ammonia. The protein is Glutamine synthetase of Streptomyces hygroscopicus.